We begin with the raw amino-acid sequence, 679 residues long: MTSSPTHQVVHEANNIKKQETPKEFFERQPRQGHITSLEQYQELYEKSINDPETFFGEFGKELLHWDRDFERVKSGSLLHGDAAWFIGGQLNACYNCVDRHAFATPNKPAIIYEADEEKDSKILTFAELLREVCQVAGVLQSWGIKKGDTVAIYMPMNSQAIIAMLAVARLGAIHSVIFAGFSSGSIKDRVNDASCKALITCDEGRRGGKTINIKKLCDEALLNCPSIEKVLVYERTGNKEVTLKEGRDYWWSEETQKFAGYLPPVPVNSEDPLFLLYTSGSTGTPKGVVHSTAGYLLGAALTTKYVFDIHPEDVLFTAGDVGWITGHTYALYGPLSLGVPTVVFEGTPAFPDYGRLWQIVEKHKATHFYVAPTALRLLRKSGEQEIEKYDLSSLRTLGSVGEPISPDIWEWYNEKVGKGQCHVTDTYWQTESGSHFIAPIAGVVPNKPGSAAVPFFGIQTCLIDPVSGIEIQGNDVEGVLAVKDTWPSMARSVYKNHTKYMDTYLNPYPGYYFTGDGAARDHDGYYWIRGRVDDVVNVSGHRLSTAEIEAALIEHNAISEAAVVGMNDDLTGQTVVAFVALKEHLIANLKADESPEEALKLKKEMILQVRTQIGPFAAPKSVIIVEDLPKTRSGKIMRRILRKIAAGEADQLGDITTLSNPQSVAGIIGSFDSQFGKK.

Residues 1 to 32 (MTSSPTHQVVHEANNIKKQETPKEFFERQPRQ) are disordered. Residues 14-30 (NNIKKQETPKEFFERQP) show a composition bias toward basic and acidic residues. CoA contacts are provided by residues 207 to 210 (RGGK) and Thr326. ATP contacts are provided by residues 402 to 404 (GEP), 426 to 431 (DTYWQT), Asp517, and Arg532. Ser540 contacts CoA. Arg543 contributes to the ATP binding site. CoA is bound at residue Arg611.

It belongs to the ATP-dependent AMP-binding enzyme family.

The catalysed reaction is acetate + ATP + CoA = acetyl-CoA + AMP + diphosphate. This is Acetyl-coenzyme A synthetase 2 (ACS2) from Debaryomyces hansenii (strain ATCC 36239 / CBS 767 / BCRC 21394 / JCM 1990 / NBRC 0083 / IGC 2968) (Yeast).